Here is a 202-residue protein sequence, read N- to C-terminus: Imidazoleglycerol-phosphate dehydratase (202 aa).

The protein belongs to the imidazoleglycerol-phosphate dehydratase family.

The protein localises to the cytoplasm. It carries out the reaction D-erythro-1-(imidazol-4-yl)glycerol 3-phosphate = 3-(imidazol-4-yl)-2-oxopropyl phosphate + H2O. It participates in amino-acid biosynthesis; L-histidine biosynthesis; L-histidine from 5-phospho-alpha-D-ribose 1-diphosphate: step 6/9. The protein is Imidazoleglycerol-phosphate dehydratase of Acinetobacter baumannii (strain SDF).